A 404-amino-acid chain; its full sequence is 2,3-diketo-5-methylthiopentyl-1-phosphate enolase (404 aa).

Lys-91 functions as the Proton acceptor in the catalytic mechanism. Residues Lys-140, 166–169 (KDDE), His-257, Gly-329, and 351–352 (GG) each bind substrate. Mg(2+) is bound by residues Lys-166, Asp-168, and Glu-169. The residue at position 166 (Lys-166) is an N6-carboxylysine.

This sequence belongs to the RuBisCO large chain family. Type IV subfamily. In terms of assembly, homodimer. Requires Mg(2+) as cofactor.

The enzyme catalyses 5-methylsulfanyl-2,3-dioxopentyl phosphate = 2-hydroxy-5-methylsulfanyl-3-oxopent-1-enyl phosphate. The protein operates within amino-acid biosynthesis; L-methionine biosynthesis via salvage pathway; L-methionine from S-methyl-5-thio-alpha-D-ribose 1-phosphate: step 3/6. In terms of biological role, catalyzes the enolization of 2,3-diketo-5-methylthiopentyl-1-phosphate (DK-MTP-1-P) into 2-hydroxy-3-keto-5-methylthiopentenyl-1-phosphate (HK-MTPenyl-1-P). This chain is 2,3-diketo-5-methylthiopentyl-1-phosphate enolase, found in Bacillus velezensis (strain DSM 23117 / BGSC 10A6 / LMG 26770 / FZB42) (Bacillus amyloliquefaciens subsp. plantarum).